Here is a 266-residue protein sequence, read N- to C-terminus: Coiled-coil domain-containing glutamate-rich protein 2 (266 aa).

An N-terminal signal peptide occupies residues 1–23 (MPPRGPASELLLLRLLLLGAATA). Composition is skewed to basic and acidic residues over residues 90–100 (EAGKMRSSQEV), 154–188 (LWQR…EKGV), 204–213 (GGGERREDLP), and 221–266 (QPEA…RREG). The segment at 90 to 266 (EAGKMRSSQE…TLGEQLRREG (177 aa)) is disordered.

In terms of tissue distribution, expressed at higher levels in fetal brain and skeletal muscle. Lower expression is detected in fetal kidney, liver, spleen, thymus, heart and lung.

It localises to the secreted. This is Coiled-coil domain-containing glutamate-rich protein 2 (CCER2) from Homo sapiens (Human).